Consider the following 215-residue polypeptide: ATP-dependent Clp protease proteolytic subunit (215 aa).

Residue Ser116 is the Nucleophile of the active site. His141 is a catalytic residue.

This sequence belongs to the peptidase S14 family. Fourteen ClpP subunits assemble into 2 heptameric rings which stack back to back to give a disk-like structure with a central cavity, resembling the structure of eukaryotic proteasomes.

Its subcellular location is the cytoplasm. It catalyses the reaction Hydrolysis of proteins to small peptides in the presence of ATP and magnesium. alpha-casein is the usual test substrate. In the absence of ATP, only oligopeptides shorter than five residues are hydrolyzed (such as succinyl-Leu-Tyr-|-NHMec, and Leu-Tyr-Leu-|-Tyr-Trp, in which cleavage of the -Tyr-|-Leu- and -Tyr-|-Trp bonds also occurs).. In terms of biological role, cleaves peptides in various proteins in a process that requires ATP hydrolysis. Has a chymotrypsin-like activity. Plays a major role in the degradation of misfolded proteins. The sequence is that of ATP-dependent Clp protease proteolytic subunit from Psychrobacter cryohalolentis (strain ATCC BAA-1226 / DSM 17306 / VKM B-2378 / K5).